The following is a 324-amino-acid chain: tRNA uridine(34) hydroxylase (324 aa).

A Rhodanese domain is found at 127–221 (QQEETIVIDA…YGKDPEVQGE (95 aa)). The active-site Cysteine persulfide intermediate is the cysteine 181.

The protein belongs to the TrhO family.

It carries out the reaction uridine(34) in tRNA + AH2 + O2 = 5-hydroxyuridine(34) in tRNA + A + H2O. Its function is as follows. Catalyzes oxygen-dependent 5-hydroxyuridine (ho5U) modification at position 34 in tRNAs. This chain is tRNA uridine(34) hydroxylase, found in Bacillus cytotoxicus (strain DSM 22905 / CIP 110041 / 391-98 / NVH 391-98).